Consider the following 223-residue polypeptide: SCMKAAPMKEVSLRGQGNLAYPGLRTQANLENLGGPNDATRGLTSLADTFEQVIEELLDEQQAIQPSKENKDADLYSSRVMLSSQVPLEPPLLFLLEEYKNYLDAANMSMRVRRHSDPARRGELSVCESTSEWVTAAEKKTAVDMSGATVTVLEKVPVPKGQLKQYFYETKCSSKGYTKEGCRGIDKRYWNSQCRTTQSYVRALTMDNKKRVGWRFIRIDTSC.

An N-terminal signal peptide occupies residues 1-5 (SCMKA). A propeptide spanning residues 6–114 (APMKEVSLRG…AANMSMRVRR (109 aa)) is cleaved from the precursor. N-linked (GlcNAc...) asparagine glycosylation occurs at N107. 2 disulfide bridges follow: C127/C194 and C172/C223.

Belongs to the NGF-beta family.

It is found in the secreted. Functionally, promotes the survival of neuronal populations that are all located either in the central nervous system or directly connected to it. The protein is Neurotrophic factor BDNF precursor form (BDNF) of Ramphotyphlops sp. (strain YPM 13663) (Blind snake).